A 285-amino-acid polypeptide reads, in one-letter code: Glycine--tRNA ligase alpha subunit (285 aa).

The protein belongs to the class-II aminoacyl-tRNA synthetase family. Tetramer of two alpha and two beta subunits.

The protein resides in the cytoplasm. The enzyme catalyses tRNA(Gly) + glycine + ATP = glycyl-tRNA(Gly) + AMP + diphosphate. This chain is Glycine--tRNA ligase alpha subunit, found in Thermodesulfovibrio yellowstonii (strain ATCC 51303 / DSM 11347 / YP87).